A 294-amino-acid chain; its full sequence is Endolytic peptidoglycan transglycosylase RlpA (294 aa).

The signal sequence occupies residues 1 to 23 (MKQKIFQILTALCCIFYVMSAQA). Positions 216–291 (EKYTTVYKIR…NYSKPLIVYT (76 aa)) constitute an SPOR domain.

The protein belongs to the RlpA family.

Functionally, lytic transglycosylase with a strong preference for naked glycan strands that lack stem peptides. The polypeptide is Endolytic peptidoglycan transglycosylase RlpA (Pasteurella multocida (strain Pm70)).